We begin with the raw amino-acid sequence, 545 residues long: Chaperonin GroEL (545 aa).

ATP contacts are provided by residues 30 to 33 (TLGP), lysine 51, 87 to 91 (DGTTT), glycine 415, 479 to 481 (NAA), and aspartate 495.

The protein belongs to the chaperonin (HSP60) family. Forms a cylinder of 14 subunits composed of two heptameric rings stacked back-to-back. Interacts with the co-chaperonin GroES.

The protein localises to the cytoplasm. It carries out the reaction ATP + H2O + a folded polypeptide = ADP + phosphate + an unfolded polypeptide.. Its function is as follows. Together with its co-chaperonin GroES, plays an essential role in assisting protein folding. The GroEL-GroES system forms a nano-cage that allows encapsulation of the non-native substrate proteins and provides a physical environment optimized to promote and accelerate protein folding. The sequence is that of Chaperonin GroEL from Tolumonas auensis (strain DSM 9187 / NBRC 110442 / TA 4).